A 338-amino-acid polypeptide reads, in one-letter code: Methionine import ATP-binding protein MetN 1 (338 aa).

Positions 2-241 (IEVRSVTKRF…PHSELGVGLL (240 aa)) constitute an ABC transporter domain. ATP is bound at residue 38–45 (GQSGAGKT).

Belongs to the ABC transporter superfamily. Methionine importer (TC 3.A.1.24) family. As to quaternary structure, the complex is composed of two ATP-binding proteins (MetN), two transmembrane proteins (MetI) and a solute-binding protein (MetQ).

The protein localises to the cell membrane. It carries out the reaction L-methionine(out) + ATP + H2O = L-methionine(in) + ADP + phosphate + H(+). It catalyses the reaction D-methionine(out) + ATP + H2O = D-methionine(in) + ADP + phosphate + H(+). In terms of biological role, part of the ABC transporter complex MetNIQ involved in methionine import. Responsible for energy coupling to the transport system. This is Methionine import ATP-binding protein MetN 1 from Rhodococcus jostii (strain RHA1).